The chain runs to 129 residues: Small ribosomal subunit protein uS12 (129 aa).

The disordered stretch occupies residues methionine 1–glutamate 25. Over residues phenylalanine 10–lysine 20 the composition is skewed to basic residues. Aspartate 89 is subject to 3-methylthioaspartic acid. The tract at residues glycine 109–lysine 129 is disordered.

It belongs to the universal ribosomal protein uS12 family. As to quaternary structure, part of the 30S ribosomal subunit. Contacts proteins S8 and S17. May interact with IF1 in the 30S initiation complex.

Functionally, with S4 and S5 plays an important role in translational accuracy. Interacts with and stabilizes bases of the 16S rRNA that are involved in tRNA selection in the A site and with the mRNA backbone. Located at the interface of the 30S and 50S subunits, it traverses the body of the 30S subunit contacting proteins on the other side and probably holding the rRNA structure together. The combined cluster of proteins S8, S12 and S17 appears to hold together the shoulder and platform of the 30S subunit. This Rickettsia peacockii (strain Rustic) protein is Small ribosomal subunit protein uS12.